The chain runs to 113 residues: Transcription initiation factor IIA subunit 2 (113 aa).

It belongs to the TFIIA subunit 2 family. As to quaternary structure, TFIIA is a heterodimer of the large unprocessed subunit 1 and a small subunit gamma. It was originally believed to be a heterotrimer of an alpha, a beta and a gamma subunit.

Its subcellular location is the nucleus. TFIIA is a component of the transcription machinery of RNA polymerase II and plays an important role in transcriptional activation. TFIIA in a complex with TBP mediates transcriptional activity. The chain is Transcription initiation factor IIA subunit 2 from Caenorhabditis elegans.